We begin with the raw amino-acid sequence, 761 residues long: Centrosomal protein of 85 kDa (761 aa).

Disordered regions lie at residues methionine 1–glutamine 33 and proline 95–leucine 117. Residues alanine 14–glutamine 33 are compositionally biased toward polar residues. Residue serine 16 is modified to Phosphoserine. Phosphoserine is present on serine 140. 2 disordered regions span residues lysine 226–serine 279 and lysine 435–glutamine 472. The mediates interaction with NEK2 and is required for its function in the suppression of centrosome disjunction stretch occupies residues glycine 256–threonine 432. Coiled coils occupy residues glutamate 333 to glutamine 656 and aspartate 723 to arginine 749. The interval leucine 433–isoleucine 475 is required for centrosome localization and for its function in the suppression of centrosome disjunction. Composition is skewed to basic and acidic residues over residues lysine 435–isoleucine 454 and glutamine 462–glutamine 472.

It belongs to the CEP85 family. In terms of assembly, homodimer. Interacts with STIL (via N-terminus); this interaction is essential for robust PLK4 activation and efficient centriole assembly and for PLK4-dependent cell migration. Interacts with PLK4; required for CEP85 to be able to drive centriole duplication and cell migration.

It is found in the cytoplasm. The protein resides in the cytoskeleton. It localises to the microtubule organizing center. The protein localises to the centrosome. Its subcellular location is the spindle pole. It is found in the nucleus. The protein resides in the nucleolus. It localises to the centriole. The protein localises to the cell cortex. Acts as a regulator of centriole duplication through a direct interaction with STIL, a key factor involved in the early steps of centriole formation. The CEP85-STIL protein complex acts as a modulator of PLK4-driven cytoskeletal rearrangements and directional cell motility. Acts as a negative regulator of NEK2 to maintain the centrosome integrity in interphase. Suppresses centrosome disjunction by inhibiting NEK2 kinase activity. This is Centrosomal protein of 85 kDa (Cep85) from Mus musculus (Mouse).